A 58-amino-acid chain; its full sequence is Small ribosomal subunit protein bS21 (58 aa).

The interval 31 to 58 is disordered; sequence DLKRIRHHETPVEKYKRKAQQRRRSRRR. Over residues 45-58 the composition is skewed to basic residues; the sequence is YKRKAQQRRRSRRR.

This sequence belongs to the bacterial ribosomal protein bS21 family.

In Prochlorococcus marinus (strain MIT 9303), this protein is Small ribosomal subunit protein bS21.